Consider the following 264-residue polypeptide: S-adenosylmethionine decarboxylase proenzyme (264 aa).

Ser-113 acts as the Schiff-base intermediate with substrate; via pyruvic acid in catalysis. Ser-113 bears the Pyruvic acid (Ser); by autocatalysis mark. The active-site Proton acceptor; for processing activity is the His-118. Catalysis depends on Cys-141, which acts as the Proton donor; for catalytic activity.

Belongs to the prokaryotic AdoMetDC family. Type 2 subfamily. In terms of assembly, heterooctamer of four alpha and four beta chains arranged as a tetramer of alpha/beta heterodimers. Pyruvate is required as a cofactor. Is synthesized initially as an inactive proenzyme. Formation of the active enzyme involves a self-maturation process in which the active site pyruvoyl group is generated from an internal serine residue via an autocatalytic post-translational modification. Two non-identical subunits are generated from the proenzyme in this reaction, and the pyruvate is formed at the N-terminus of the alpha chain, which is derived from the carboxyl end of the proenzyme. The post-translation cleavage follows an unusual pathway, termed non-hydrolytic serinolysis, in which the side chain hydroxyl group of the serine supplies its oxygen atom to form the C-terminus of the beta chain, while the remainder of the serine residue undergoes an oxidative deamination to produce ammonia and the pyruvoyl group blocking the N-terminus of the alpha chain.

The catalysed reaction is S-adenosyl-L-methionine + H(+) = S-adenosyl 3-(methylsulfanyl)propylamine + CO2. The protein operates within amine and polyamine biosynthesis; S-adenosylmethioninamine biosynthesis; S-adenosylmethioninamine from S-adenosyl-L-methionine: step 1/1. Its function is as follows. Catalyzes the decarboxylation of S-adenosylmethionine to S-adenosylmethioninamine (dcAdoMet), the propylamine donor required for the synthesis of the polyamines spermine and spermidine from the diamine putrescine. This Hahella chejuensis (strain KCTC 2396) protein is S-adenosylmethionine decarboxylase proenzyme.